A 161-amino-acid chain; its full sequence is Type II secretion system protein M (161 aa).

At Met-1 to Arg-16 the chain is on the cytoplasmic side. Residues Cys-17 to Trp-36 traverse the membrane as a helical segment. Over Gln-37–Lys-161 the chain is Periplasmic.

It belongs to the GSP M family. In terms of assembly, type II secretion system is composed of four main components: the outer membrane complex, the inner membrane complex, the cytoplasmic secretion ATPase and the periplasm-spanning pseudopilus. Forms homodimers. Interacts with PulL/GspL. Interacts with PulE/GspE and PulF/GspF.

Its subcellular location is the cell inner membrane. Inner membrane component of the type II secretion system required for the energy-dependent secretion of extracellular factors such as proteases and toxins from the periplasm. Plays a role in the complex assembly and recruits PulL resulting in a stable complex in the inner membrane. Provides thus a link between the energy-providing PulE protein in the cytoplasm and the rest of the T2SS machinery. In Klebsiella pneumoniae, this protein is Type II secretion system protein M (pulM).